The following is a 241-amino-acid chain: Pyridoxal phosphate phosphatase PHOSPHO2 (241 aa).

Asp-8 serves as the catalytic Nucleophile. Residues Asp-8 and Asp-10 each coordinate Mg(2+). Asp-10 functions as the Proton donor in the catalytic mechanism. Residues Asp-19 and Asp-99 each contribute to the substrate site. Residue Asp-179 coordinates Mg(2+).

The protein belongs to the HAD-like hydrolase superfamily. PHOSPHO family. It depends on Mg(2+) as a cofactor.

The enzyme catalyses pyridoxal 5'-phosphate + H2O = pyridoxal + phosphate. In terms of biological role, phosphatase that has high activity toward pyridoxal 5'-phosphate (PLP). Also active at much lower level toward pyrophosphate, phosphoethanolamine (PEA), phosphocholine (PCho), phospho-l-tyrosine, fructose-6-phosphate, p-nitrophenyl phosphate, and h-glycerophosphate. The protein is Pyridoxal phosphate phosphatase PHOSPHO2 (PHOSPHO2) of Bos taurus (Bovine).